The following is a 119-amino-acid chain: Holo-[acyl-carrier-protein] synthase (119 aa).

Asp-5 and Glu-51 together coordinate Mg(2+).

The protein belongs to the P-Pant transferase superfamily. AcpS family. Mg(2+) serves as cofactor.

Its subcellular location is the cytoplasm. The catalysed reaction is apo-[ACP] + CoA = holo-[ACP] + adenosine 3',5'-bisphosphate + H(+). Transfers the 4'-phosphopantetheine moiety from coenzyme A to a Ser of acyl-carrier-protein. The protein is Holo-[acyl-carrier-protein] synthase of Helicobacter pylori (strain HPAG1).